Consider the following 258-residue polypeptide: MKNITFIFFILLASPLYANGDRLYRADSRPPDEIKRSGGLMPRGHNEYFDRGTQMNINLYDHARGTQTGFVRYDDGYVSTSLSLRSAHLAGQSILSGYSTYYIYVIATAPNMFNVNDVLGVYSPHPYEQEVSALGGIPYSQIYGWYRVNFGVIDERLHRNREYRDRYYRNLNIAPAEDGYRLAGFPPDHQAWREEPWIHHAPQGCGNSSRTITGDTCNEETQNLSTIYLREYQSKVKRQIFSDYQSEVDIYNRIRDEL.

A signal peptide spans 1-18 (MKNITFIFFILLASPLYA). NAD(+) is bound at residue 25–39 (RADSRPPDEIKRSGG). Glutamate 130 is an active-site residue. A disulfide bridge links cysteine 205 with cysteine 217.

The protein belongs to the enterotoxin A family. Heterohexamer of one A chain and of five B chains.

Functionally, the biological activity of the toxin is produced by the A chain, which activates intracellular adenyl cyclase. This Escherichia coli protein is Heat-labile enterotoxin A chain (eltA).